Reading from the N-terminus, the 96-residue chain is DVSGTVCLSALPPEATDTLNLIASDGPFPYSQDGVVFQNRESVLPTQSYGYYHEYTVITPGARTRGTRRIITGEATQEDYYTGDHYATFSLIDQTC.

The cysteines at positions 7 and 96 are disulfide-linked. The Proton acceptor role is filled by Glu-54. Catalysis depends on His-85, which acts as the Proton donor.

It belongs to the ribonuclease N1/T1 family.

It localises to the secreted. It catalyses the reaction [RNA] containing guanosine + H2O = an [RNA fragment]-3'-guanosine-3'-phosphate + a 5'-hydroxy-ribonucleotide-3'-[RNA fragment].. The chain is Guanyl-specific ribonuclease Sa (rnaSA) from Kitasatospora aureofaciens (Streptomyces aureofaciens).